The primary structure comprises 204 residues: Urease accessory protein UreG (204 aa).

Residue 12 to 19 participates in GTP binding; sequence GPVGSGKT.

Belongs to the SIMIBI class G3E GTPase family. UreG subfamily. In terms of assembly, homodimer. UreD, UreF and UreG form a complex that acts as a GTP-hydrolysis-dependent molecular chaperone, activating the urease apoprotein by helping to assemble the nickel containing metallocenter of UreC. The UreE protein probably delivers the nickel.

It is found in the cytoplasm. Functionally, facilitates the functional incorporation of the urease nickel metallocenter. This process requires GTP hydrolysis, probably effectuated by UreG. The chain is Urease accessory protein UreG from Stutzerimonas stutzeri (strain A1501) (Pseudomonas stutzeri).